The following is a 1845-amino-acid chain: Helicase swr-1 (1845 aa).

The span at 1 to 13 (MTTMMTDSGTASD) shows a compositional bias: polar residues. The interval 1–329 (MTTMMTDSGT…GASRATPRIK (329 aa)) is disordered. A compositionally biased stretch (low complexity) spans 24–38 (NDTTTTTTTTTTPGD). Over residues 63 to 84 (SKSYSSTHHVPAIDNTSTTNAN) the composition is skewed to polar residues. Residues 98-108 (SPLSSISSPLS) are compositionally biased toward low complexity. Residues 168–180 (PKPESPPWKKFEA) show a composition bias toward basic and acidic residues. Residues 216–243 (AIQTSPVSNKSSASTSRKPAPASSSNSK) show a composition bias toward polar residues. Composition is skewed to pro residues over residues 248 to 258 (KMPPPPPPPKA) and 283 to 292 (PRRPATPPKP). The region spanning 418–493 (PEAEEEPPRQ…EMEASKAKWR (76 aa)) is the HSA domain. 2 disordered regions span residues 539–713 (QKLQ…LFFG) and 749–935 (ELQV…TVKT). Over residues 549–565 (DGDEITDEDEDEDDEDL) the composition is skewed to acidic residues. A compositionally biased stretch (basic and acidic residues) spans 574 to 585 (GDEKESDEHSDQ). Acidic residues-rich tracts occupy residues 586–608 (GSDE…SSED) and 663–704 (NDDD…DDEP). Composition is skewed to polar residues over residues 762 to 777 (TNGT…SQTE) and 815 to 834 (TNDS…NQTL). Low complexity predominate over residues 888–897 (SQSQTQSPKT). The span at 898 to 909 (TDTKPTDVDTPH) shows a compositional bias: basic and acidic residues. Over residues 922–933 (RQSSPQPTTPTV) the composition is skewed to polar residues. A Helicase ATP-binding domain is found at 957–1122 (AGLYANNTNG…WSLLYFLAPP (166 aa)). 970-977 (DEMGLGKT) contacts ATP. Positions 1073-1076 (DEAH) match the DEAH box motif. The 151-residue stretch at 1510-1660 (ALDKLLRKLQ…DVVIQEGEFT (151 aa)) folds into the Helicase C-terminal domain. Disordered regions lie at residues 1702-1724 (TTGA…PPVR), 1751-1783 (QDEA…GGEE), and 1816-1845 (LEGT…SRKR). A compositionally biased stretch (gly residues) spans 1704-1718 (GAGGYDGTADGGGGA). Over residues 1769-1781 (DGLADLDGQLLGG) the composition is skewed to low complexity. The span at 1826–1845 (DRKKGRDRNRNRKGKDSRKR) shows a compositional bias: basic residues.

It belongs to the SNF2/RAD54 helicase family. SWR1 subfamily. As to quaternary structure, component of the SWR1 chromatin-remodeling complex.

The protein resides in the nucleus. It catalyses the reaction ATP + H2O = ADP + phosphate + H(+). Its function is as follows. Catalytic component of the SWR1 complex which mediates the ATP-dependent exchange of histone H2A for the H2A variant H2A.Z leading to transcriptional regulation of selected genes by chromatin remodeling. This chain is Helicase swr-1 (crf1-1), found in Neurospora crassa (strain ATCC 24698 / 74-OR23-1A / CBS 708.71 / DSM 1257 / FGSC 987).